Reading from the N-terminus, the 620-residue chain is Glutathione-regulated potassium-efflux system protein KefC (620 aa).

12 consecutive transmembrane segments (helical) span residues 4 to 24, 26 to 46, 54 to 74, 90 to 110, 114 to 134, 149 to 169, 178 to 198, 218 to 238, 270 to 290, 294 to 314, 327 to 347, and 359 to 379; these read HTLV…PIAV, LGLG…PWGL, SILH…GLEL, GALQ…LLGL, VAEL…MQAM, FAVL…IPLL, MGAF…VVLL, VFSA…EEVG, GLLL…GTLL, LRIV…LWLI, WFAV…GAAQ, and SLTL…VILN. Residues 399–518 enclose the RCK N-terminal domain; sequence QPRVIIAGFG…AGVEKPERET (120 aa). The tract at residues 597-620 is disordered; sequence GWQGTEEGKHTGNMADEPETKPSS.

This sequence belongs to the monovalent cation:proton antiporter 2 (CPA2) transporter (TC 2.A.37) family. KefC subfamily. In terms of assembly, homodimer. Interacts with the regulatory subunit KefF.

Its subcellular location is the cell inner membrane. Pore-forming subunit of a potassium efflux system that confers protection against electrophiles. Catalyzes K(+)/H(+) antiport. The sequence is that of Glutathione-regulated potassium-efflux system protein KefC from Escherichia coli O139:H28 (strain E24377A / ETEC).